The chain runs to 555 residues: Oxamate carbamoyltransferase subunit AllF (555 aa).

This sequence belongs to the AllF family. As to quaternary structure, the OXTCase is composed of 3 subunits, AllF, AllG and AllH. It depends on Mg(2+) as a cofactor.

The catalysed reaction is oxamate + carbamoyl phosphate = N-carbamoyl-2-oxoglycine + phosphate. The protein operates within nitrogen metabolism; (S)-allantoin degradation. Its function is as follows. Component of a carbamoyltransferase involved in the anaerobic nitrogen utilization via the assimilation of allantoin. Catalyzes the conversion of oxalurate (N-carbamoyl-2-oxoglycine) to oxamate and carbamoyl phosphate. In Escherichia coli (strain K12), this protein is Oxamate carbamoyltransferase subunit AllF.